Here is a 335-residue protein sequence, read N- to C-terminus: Phosphatidylglycerol--prolipoprotein diacylglyceryl transferase (335 aa).

The next 3 helical transmembrane spans lie at I31–L51, Y67–G87, and L100–I120. R163 contributes to the a 1,2-diacyl-sn-glycero-3-phospho-(1'-sn-glycerol) binding site. 3 helical membrane-spanning segments follow: residues P213–L233, Y235–I255, and S277–L297.

The protein belongs to the Lgt family.

Its subcellular location is the cell membrane. The catalysed reaction is L-cysteinyl-[prolipoprotein] + a 1,2-diacyl-sn-glycero-3-phospho-(1'-sn-glycerol) = an S-1,2-diacyl-sn-glyceryl-L-cysteinyl-[prolipoprotein] + sn-glycerol 1-phosphate + H(+). Its pathway is protein modification; lipoprotein biosynthesis (diacylglyceryl transfer). Its function is as follows. Catalyzes the transfer of the diacylglyceryl group from phosphatidylglycerol to the sulfhydryl group of the N-terminal cysteine of a prolipoprotein, the first step in the formation of mature lipoproteins. This chain is Phosphatidylglycerol--prolipoprotein diacylglyceryl transferase, found in Ureaplasma urealyticum serovar 10 (strain ATCC 33699 / Western).